The following is a 670-amino-acid chain: Neutral ceramidase (670 aa).

The N-terminal stretch at 1–24 (MSRSAFTALLLSCVLLALSMPARA) is a signal peptide. Residue His-61 coordinates Mg(2+). Substrate-binding residues include Asn-84, Gln-92, and Asp-111. Zn(2+) is bound at residue His-121. Residue Ser-130 participates in substrate binding. His-228 contacts Zn(2+). Ser-274 serves as the catalytic Nucleophile. The cysteines at positions 346 and 394 are disulfide-linked. Glu-435 contacts Zn(2+). Tyr-469 provides a ligand contact to substrate. Tyr-472 is a Zn(2+) binding site. Residues Asp-603, Asp-605, and Thr-608 each contribute to the Mg(2+) site. Residues 644-670 (NAKNFWTQKISEIGGSTRSFEVLGTTP) are required for correct folding and localization.

This sequence belongs to the neutral ceramidase family. Homodimer. The cofactor is Zn(2+). Requires Mg(2+) as cofactor.

Its subcellular location is the secreted. It catalyses the reaction an N-acylsphing-4-enine + H2O = sphing-4-enine + a fatty acid. Inhibited by EDTA, EGTA and D/L-sphinganine D-erythro-sphingosine. L-erythro-sphingosine is a less powerful inhibitor. Stimulated by glycerophospholipids: cardiolipin is the most effective, followed by phosphatidic acid, phosphatidylethanolamine and phosphatidylglycerol, whereas phosphatidylcholine, lysophosphatidic acid and diacylglycerol are less effective. Functionally, catalyzes the cleavage of the N-acyl linkage of the ceramides (Cers) to yield sphingosine (Sph) and free fatty acid at an optimal pH of 8-9. Also catalyzes the synthesis of Cers from Sph and fatty acid. The polypeptide is Neutral ceramidase (Pseudomonas aeruginosa (strain ATCC 15692 / DSM 22644 / CIP 104116 / JCM 14847 / LMG 12228 / 1C / PRS 101 / PAO1)).